The following is an 880-amino-acid chain: Valine--tRNA ligase (880 aa).

Residues P47–H57 carry the 'HIGH' region motif. A 'KMSKS' region motif is present at residues K526–S530. K529 is an ATP binding site. Residues L810–R845 adopt a coiled-coil conformation.

The protein belongs to the class-I aminoacyl-tRNA synthetase family. ValS type 1 subfamily. Monomer.

Its subcellular location is the cytoplasm. The catalysed reaction is tRNA(Val) + L-valine + ATP = L-valyl-tRNA(Val) + AMP + diphosphate. Functionally, catalyzes the attachment of valine to tRNA(Val). As ValRS can inadvertently accommodate and process structurally similar amino acids such as threonine, to avoid such errors, it has a 'posttransfer' editing activity that hydrolyzes mischarged Thr-tRNA(Val) in a tRNA-dependent manner. The chain is Valine--tRNA ligase from Clostridium perfringens (strain 13 / Type A).